The chain runs to 86 residues: MKQKLLLSGLAVSTVGITSYLLKDPSNRQKAREFIHSMKMKITKQPDMETFPVDKAGHPDPQDIEDNKMVSEGSMYPVQYYDEKKK.

The N-terminal stretch at 1–31 (MKQKLLLSGLAVSTVGITSYLLKDPSNRQKA) is a signal peptide. The tract at residues 46–69 (PDMETFPVDKAGHPDPQDIEDNKM) is disordered. The span at 55 to 69 (KAGHPDPQDIEDNKM) shows a compositional bias: basic and acidic residues.

This is an uncharacterized protein from Bacillus subtilis (strain 168).